A 216-amino-acid polypeptide reads, in one-letter code: Protein ADP-ribose pyrophosphatase ORF38 (216 aa).

The 177-residue stretch at 1-177 (MRNAAGLFMI…DYSNYIEFFD (177 aa)) folds into the Nudix hydrolase domain. The short motif at 48 to 70 (GHRDCCDAKVYETAVREFVEETG) is the Nudix box element.

It localises to the host cytoplasm. Its subcellular location is the host nucleus. The enzyme catalyses ADP-D-ribose + H2O = D-ribose 5-phosphate + AMP + 2 H(+). In terms of biological role, plays an important role in virus replication most probably through its hydrolyzing ADP-ribose activity in host cells. May function in viral DNA replication or transcription directly, or by removing toxic substances or metabolic intermediates. This is Protein ADP-ribose pyrophosphatase ORF38 from Lepidoptera (butterflies and moths).